Here is a 175-residue protein sequence, read N- to C-terminus: Adenine phosphoribosyltransferase (175 aa).

The protein belongs to the purine/pyrimidine phosphoribosyltransferase family. As to quaternary structure, homodimer.

Its subcellular location is the cytoplasm. The enzyme catalyses AMP + diphosphate = 5-phospho-alpha-D-ribose 1-diphosphate + adenine. It participates in purine metabolism; AMP biosynthesis via salvage pathway; AMP from adenine: step 1/1. Functionally, catalyzes a salvage reaction resulting in the formation of AMP, that is energically less costly than de novo synthesis. This is Adenine phosphoribosyltransferase from Lacticaseibacillus paracasei (strain ATCC 334 / BCRC 17002 / CCUG 31169 / CIP 107868 / KCTC 3260 / NRRL B-441) (Lactobacillus paracasei).